The following is a 440-amino-acid chain: Chromosomal replication initiator protein DnaA (440 aa).

The segment at 1–69 (MKERILQEIK…VKVVLGNDAT (69 aa)) is domain I, interacts with DnaA modulators. The segment at 69–96 (TFEITYEAFEPHSSYSEPLVKKRAVLLT) is domain II. The domain III, AAA+ region stretch occupies residues 97-313 (PLNPDYTFEN…GAIIKLLVYK (217 aa)). ATP contacts are provided by glycine 140, glycine 142, lysine 143, and threonine 144. Residues 314-440 (ETTGKEVDLR…GEISKRALSG (127 aa)) are domain IV, binds dsDNA.

It belongs to the DnaA family. As to quaternary structure, oligomerizes as a right-handed, spiral filament on DNA at oriC.

The protein resides in the cytoplasm. In terms of biological role, plays an essential role in the initiation and regulation of chromosomal replication. ATP-DnaA binds to the origin of replication (oriC) to initiate formation of the DNA replication initiation complex once per cell cycle. Binds the DnaA box (a 9 base pair repeat at the origin) and separates the double-stranded (ds)DNA. Forms a right-handed helical filament on oriC DNA; dsDNA binds to the exterior of the filament while single-stranded (ss)DNA is stabiized in the filament's interior. The ATP-DnaA-oriC complex binds and stabilizes one strand of the AT-rich DNA unwinding element (DUE), permitting loading of DNA polymerase. After initiation quickly degrades to an ADP-DnaA complex that is not apt for DNA replication. Binds acidic phospholipids. The chain is Chromosomal replication initiator protein DnaA from Thermotoga petrophila (strain ATCC BAA-488 / DSM 13995 / JCM 10881 / RKU-1).